The primary structure comprises 97 residues: Co-chaperonin GroES (97 aa).

This sequence belongs to the GroES chaperonin family. Heptamer of 7 subunits arranged in a ring. Interacts with the chaperonin GroEL.

It is found in the cytoplasm. Functionally, together with the chaperonin GroEL, plays an essential role in assisting protein folding. The GroEL-GroES system forms a nano-cage that allows encapsulation of the non-native substrate proteins and provides a physical environment optimized to promote and accelerate protein folding. GroES binds to the apical surface of the GroEL ring, thereby capping the opening of the GroEL channel. The chain is Co-chaperonin GroES from Pseudomonas putida (Arthrobacter siderocapsulatus).